The sequence spans 256 residues: MAHLGSRRRMSPGLRTRIAHRKAHRTPPSPLIAEPDEMMGKAHELFQLCDKEDKGLITKRDLQRLQNELPLTPEQLEAVFDSLDQSNNGYLTPVEFSMGLGKLLGVNLSHEEEKENSMMEETFESGWSDGPDEEDDAEEMLFSATMEHLGASRIFQEHKEIRDLWSRLRKERPELLSHFEEFLYRVSSYIRDVHHEKDTLEQALKRKETDHGREVRCLYEEMEQQIKIERERLLKKVLIKGDHGLKNYSHLIMSKV.

Basic residues predominate over residues 1-10 (MAHLGSRRRM). Positions 1 to 32 (MAHLGSRRRMSPGLRTRIAHRKAHRTPPSPLI) are disordered. EF-hand domains follow at residues 41 to 69 (KAHE…QNEL) and 71 to 106 (LTPE…LLGV). Positions 84, 86, 88, 90, and 95 each coordinate Ca(2+). Residues 190-235 (IRDVHHEKDTLEQALKRKETDHGREVRCLYEEMEQQIKIERERLLK) adopt a coiled-coil conformation.

Belongs to the EFCAB4 family.

In Xenopus tropicalis (Western clawed frog), this protein is EF-hand calcium-binding domain-containing protein 4A (cracr2b).